A 412-amino-acid polypeptide reads, in one-letter code: Palmitoyltransferase swf1 (412 aa).

At 1-2 the chain is on the lumenal side; sequence MG. The helical transmembrane segment at 3–23 threads the bilayer; it reads LLRTIALVILGFSAFIFTVLF. Over 24-78 the chain is Cytoplasmic; the sequence is GRLPVFRKTPIGLLHRIIWLHIPHGISYIDARLFNGRILRSWGQAGNYILYENHP. Residues 79-99 traverse the membrane as a helical segment; that stretch reads LVLIFFTTILVIGELIFIPSA. The Lumenal portion of the chain corresponds to 100–107; sequence WPRISVMH. A helical transmembrane segment spans residues 108–128; sequence QLYIPIIIALPYYFLYVSVVT. The Cytoplasmic portion of the chain corresponds to 129 to 198; that stretch reads KSYITPDNHA…TNCVGLNNYH (70 aa). One can recognise a DHHC domain in the interval 155-205; that stretch reads HSCETCHFLKPARSKHCSYCKRCVSRQDHHCIWLTNCVGLNNYHYFLYLLL. The helical transmembrane segment at 199–219 threads the bilayer; that stretch reads YFLYLLLSLSVMLTYGSWLGY. Topologically, residues 220–265 are lumenal; that stretch reads SLLSQTLDRLIPPSSPVRLRKQSWPTFLNMWAAVVAYDTRIGGVTM. Residues 266-286 traverse the membrane as a helical segment; sequence LMFMTAPLAFAFLVYHVYLIW. Residues 287 to 412 are Cytoplasmic-facing; sequence AGMTTNESAK…NYAAGKAHRA (126 aa).

The protein belongs to the DHHC palmitoyltransferase family. SWF1 subfamily.

The protein resides in the endoplasmic reticulum membrane. It carries out the reaction L-cysteinyl-[protein] + hexadecanoyl-CoA = S-hexadecanoyl-L-cysteinyl-[protein] + CoA. Its function is as follows. Palmitoyltransferase that targets several endosomal SNAREs. Palmitoylates the SNAREs at cysteine residues close to the cytoplasmic end of their transmembrane domain. May have a role in the cellular quality control of transmembrane domain-containing proteins. This is Palmitoyltransferase swf1 (swf1) from Emericella nidulans (strain FGSC A4 / ATCC 38163 / CBS 112.46 / NRRL 194 / M139) (Aspergillus nidulans).